A 777-amino-acid chain; its full sequence is Lon protease (777 aa).

Positions 11 to 204 (IPVLPLRDVV…FLMAIMETEI (194 aa)) constitute a Lon N-terminal domain. Position 356 to 363 (356 to 363 (GPPGVGKT)) interacts with ATP. One can recognise a Lon proteolytic domain in the interval 592-773 (LNQIGQVVGL…EEVLKIALEN (182 aa)). Residues serine 679 and lysine 722 contribute to the active site.

It belongs to the peptidase S16 family. In terms of assembly, homohexamer. Organized in a ring with a central cavity.

The protein resides in the cytoplasm. It catalyses the reaction Hydrolysis of proteins in presence of ATP.. In terms of biological role, ATP-dependent serine protease that mediates the selective degradation of mutant and abnormal proteins as well as certain short-lived regulatory proteins. Required for cellular homeostasis and for survival from DNA damage and developmental changes induced by stress. Degrades polypeptides processively to yield small peptide fragments that are 5 to 10 amino acids long. Binds to DNA in a double-stranded, site-specific manner. The chain is Lon protease from Buchnera aphidicola subsp. Schizaphis graminum (strain Sg).